The chain runs to 216 residues: Uridine kinase (216 aa).

16–23 (GASASGKS) serves as a coordination point for ATP.

The protein belongs to the uridine kinase family.

Its subcellular location is the cytoplasm. The enzyme catalyses uridine + ATP = UMP + ADP + H(+). It catalyses the reaction cytidine + ATP = CMP + ADP + H(+). The protein operates within pyrimidine metabolism; CTP biosynthesis via salvage pathway; CTP from cytidine: step 1/3. It participates in pyrimidine metabolism; UMP biosynthesis via salvage pathway; UMP from uridine: step 1/1. The polypeptide is Uridine kinase (Pasteurella multocida (strain Pm70)).